A 295-amino-acid chain; its full sequence is Large ribosomal subunit protein uL29m (295 aa).

It belongs to the universal ribosomal protein uL29 family. As to quaternary structure, component of the mitochondrial large ribosomal subunit. Mature mitochondrial ribosomes consist of a small (37S) and a large (54S) subunit. The 37S subunit contains at least 33 different proteins and 1 molecule of RNA (15S). The 54S subunit contains at least 45 different proteins and 1 molecule of RNA (21S).

Its subcellular location is the mitochondrion. This chain is Large ribosomal subunit protein uL29m (MRPL4), found in Meyerozyma guilliermondii (strain ATCC 6260 / CBS 566 / DSM 6381 / JCM 1539 / NBRC 10279 / NRRL Y-324) (Yeast).